The sequence spans 551 residues: Periplasmic [NiFe] hydrogenase large subunit (551 aa).

Cys-65, Cys-68, Cys-530, and Cys-533 together coordinate Ni(2+). Residues 537-551 (VIDPESNQVHKFRIL) constitute a propeptide that is removed on maturation.

The protein belongs to the [NiFe]/[NiFeSe] hydrogenase large subunit family. Heterodimer of a large and a small subunit. The cofactor is Ni(2+).

It is found in the periplasm. It carries out the reaction 2 Fe(III)-[cytochrome c3] + H2 = 2 Fe(II)-[cytochrome c3] + 2 H(+). The chain is Periplasmic [NiFe] hydrogenase large subunit (hydB) from Megalodesulfovibrio gigas (Desulfovibrio gigas).